The primary structure comprises 758 residues: 5-methyltetrahydropteroyltriglutamate--homocysteine methyltransferase (758 aa).

5-methyltetrahydropteroyltri-L-glutamate is bound by residues 15-18 (RELK) and lysine 114. Residues 433–435 (IGS) and glutamate 486 each bind L-homocysteine. L-methionine-binding positions include 433–435 (IGS) and glutamate 486. 5-methyltetrahydropteroyltri-L-glutamate is bound by residues 517–518 (RC) and tryptophan 563. Aspartate 601 serves as a coordination point for L-homocysteine. Residue aspartate 601 participates in L-methionine binding. Residue glutamate 607 coordinates 5-methyltetrahydropteroyltri-L-glutamate. Zn(2+) is bound by residues histidine 643, cysteine 645, and glutamate 667. Histidine 696 serves as the catalytic Proton donor. Residue cysteine 728 coordinates Zn(2+).

It belongs to the vitamin-B12 independent methionine synthase family. It depends on Zn(2+) as a cofactor.

It carries out the reaction 5-methyltetrahydropteroyltri-L-glutamate + L-homocysteine = tetrahydropteroyltri-L-glutamate + L-methionine. The protein operates within amino-acid biosynthesis; L-methionine biosynthesis via de novo pathway; L-methionine from L-homocysteine (MetE route): step 1/1. Its function is as follows. Catalyzes the transfer of a methyl group from 5-methyltetrahydrofolate to homocysteine resulting in methionine formation. This Syntrophotalea carbinolica (strain DSM 2380 / NBRC 103641 / GraBd1) (Pelobacter carbinolicus) protein is 5-methyltetrahydropteroyltriglutamate--homocysteine methyltransferase.